We begin with the raw amino-acid sequence, 246 residues long: Phosphate import ATP-binding protein PstB (246 aa).

The 239-residue stretch at 3-241 folds into the ABC transporter domain; it reads AKTTNLNLFY…PKQEKTKAYL (239 aa). 35 to 42 lines the ATP pocket; it reads GASGCGKS.

Belongs to the ABC transporter superfamily. Phosphate importer (TC 3.A.1.7) family. In terms of assembly, the complex is composed of two ATP-binding proteins (PstB), two transmembrane proteins (PstC and PstA) and a solute-binding protein (PstS).

The protein localises to the cell inner membrane. The enzyme catalyses phosphate(out) + ATP + H2O = ADP + 2 phosphate(in) + H(+). In terms of biological role, part of the ABC transporter complex PstSACB involved in phosphate import. Responsible for energy coupling to the transport system. This Campylobacter jejuni subsp. jejuni serotype O:2 (strain ATCC 700819 / NCTC 11168) protein is Phosphate import ATP-binding protein PstB.